Consider the following 511-residue polypeptide: ATP synthase subunit beta, mitochondrial (511 aa).

The N-terminal 33 residues, 1–33 (MVLPRLYTATSRAAFKAAKQSAPLLSTSWKRCM), are a transit peptide targeting the mitochondrion. At Thr-112 the chain carries Phosphothreonine. 190–197 (GGAGVGKT) is an ATP binding site. The residue at position 237 (Thr-237) is a Phosphothreonine. A Phosphoserine modification is found at Ser-373.

It belongs to the ATPase alpha/beta chains family. In terms of assembly, F-type ATPases have 2 components, CF(1) - the catalytic core - and CF(0) - the membrane proton channel. CF(1) has five subunits: alpha(3), beta(3), gamma(1), delta(1), epsilon(1). CF(0) has three main subunits: a, b and c.

The protein resides in the mitochondrion. It is found in the mitochondrion inner membrane. It carries out the reaction ATP + H2O + 4 H(+)(in) = ADP + phosphate + 5 H(+)(out). Functionally, mitochondrial membrane ATP synthase (F(1)F(0) ATP synthase or Complex V) produces ATP from ADP in the presence of a proton gradient across the membrane which is generated by electron transport complexes of the respiratory chain. F-type ATPases consist of two structural domains, F(1) - containing the extramembraneous catalytic core, and F(0) - containing the membrane proton channel, linked together by a central stalk and a peripheral stalk. During catalysis, ATP synthesis in the catalytic domain of F(1) is coupled via a rotary mechanism of the central stalk subunits to proton translocation. Subunits alpha and beta form the catalytic core in F(1). Rotation of the central stalk against the surrounding alpha(3)beta(3) subunits leads to hydrolysis of ATP in three separate catalytic sites on the beta subunits. This is ATP synthase subunit beta, mitochondrial (ATP2) from Saccharomyces cerevisiae (strain ATCC 204508 / S288c) (Baker's yeast).